The chain runs to 190 residues: Peptidyl-tRNA hydrolase (190 aa).

Tyrosine 14 lines the tRNA pocket. Residue histidine 19 is the Proton acceptor of the active site. Residues tyrosine 64, asparagine 66, and asparagine 112 each contribute to the tRNA site.

The protein belongs to the PTH family. As to quaternary structure, monomer.

It localises to the cytoplasm. The enzyme catalyses an N-acyl-L-alpha-aminoacyl-tRNA + H2O = an N-acyl-L-amino acid + a tRNA + H(+). Functionally, hydrolyzes ribosome-free peptidyl-tRNAs (with 1 or more amino acids incorporated), which drop off the ribosome during protein synthesis, or as a result of ribosome stalling. Its function is as follows. Catalyzes the release of premature peptidyl moieties from peptidyl-tRNA molecules trapped in stalled 50S ribosomal subunits, and thus maintains levels of free tRNAs and 50S ribosomes. This chain is Peptidyl-tRNA hydrolase, found in Chlorobium limicola (strain DSM 245 / NBRC 103803 / 6330).